A 428-amino-acid chain; its full sequence is 3-phosphoshikimate 1-carboxyvinyltransferase (428 aa).

3 residues coordinate 3-phosphoshikimate: Lys20, Ser21, and Arg25. Lys20 is a phosphoenolpyruvate binding site. Phosphoenolpyruvate contacts are provided by Gly92 and Arg120. Residues Ser166, Gln168, Asp314, and Lys341 each contribute to the 3-phosphoshikimate site. Gln168 contributes to the phosphoenolpyruvate binding site. The active-site Proton acceptor is the Asp314. Phosphoenolpyruvate-binding residues include Arg345 and Arg387.

It belongs to the EPSP synthase family. Monomer.

It localises to the cytoplasm. The catalysed reaction is 3-phosphoshikimate + phosphoenolpyruvate = 5-O-(1-carboxyvinyl)-3-phosphoshikimate + phosphate. It participates in metabolic intermediate biosynthesis; chorismate biosynthesis; chorismate from D-erythrose 4-phosphate and phosphoenolpyruvate: step 6/7. In terms of biological role, catalyzes the transfer of the enolpyruvyl moiety of phosphoenolpyruvate (PEP) to the 5-hydroxyl of shikimate-3-phosphate (S3P) to produce enolpyruvyl shikimate-3-phosphate and inorganic phosphate. The polypeptide is 3-phosphoshikimate 1-carboxyvinyltransferase (Listeria welshimeri serovar 6b (strain ATCC 35897 / DSM 20650 / CCUG 15529 / CIP 8149 / NCTC 11857 / SLCC 5334 / V8)).